Consider the following 129-residue polypeptide: uncharacterized protein (129 aa).

Acidic residues predominate over residues 86-96; the sequence is NDGFSSDDEPE. Residues 86 to 129 are disordered; it reads NDGFSSDDEPEEHVILTEDNQGEPSETPQATFDITEFIKTEDED. Positions 103 to 117 are enriched in polar residues; sequence EDNQGEPSETPQATF.

The protein belongs to the asfivirus D129L family.

This is an uncharacterized protein from African swine fever virus (isolate Tick/South Africa/Pretoriuskop Pr4/1996) (ASFV).